The primary structure comprises 473 residues: Photosystem II CP43 reaction center protein (473 aa).

Positions 1 to 14 are excised as a propeptide; it reads MKTLYSLRRYFHVE. Thr15 bears the N-acetylthreonine mark. A Phosphothreonine modification is found at Thr15. 5 consecutive transmembrane segments (helical) span residues 69–93, 134–155, 178–200, 255–275, and 291–312; these read LFEV…PHLA, LIGP…KDKN, KAMY…RVIS, KPFA…LSYS, and WFNN…ASQA. Position 367 (Glu367) interacts with [CaMn4O5] cluster. A helical membrane pass occupies residues 447–471; it reads RARAAAAGFEKGIDRDTEPVLSMRP.

Belongs to the PsbB/PsbC family. PsbC subfamily. As to quaternary structure, PSII is composed of 1 copy each of membrane proteins PsbA, PsbB, PsbC, PsbD, PsbE, PsbF, PsbH, PsbI, PsbJ, PsbK, PsbL, PsbM, PsbT, PsbX, PsbY, PsbZ, Psb30/Ycf12, at least 3 peripheral proteins of the oxygen-evolving complex and a large number of cofactors. It forms dimeric complexes. It depends on Binds multiple chlorophylls and provides some of the ligands for the Ca-4Mn-5O cluster of the oxygen-evolving complex. It may also provide a ligand for a Cl- that is required for oxygen evolution. PSII binds additional chlorophylls, carotenoids and specific lipids. as a cofactor.

It localises to the plastid. The protein localises to the chloroplast thylakoid membrane. One of the components of the core complex of photosystem II (PSII). It binds chlorophyll and helps catalyze the primary light-induced photochemical processes of PSII. PSII is a light-driven water:plastoquinone oxidoreductase, using light energy to abstract electrons from H(2)O, generating O(2) and a proton gradient subsequently used for ATP formation. The polypeptide is Photosystem II CP43 reaction center protein (Ostreococcus tauri).